Here is a 492-residue protein sequence, read N- to C-terminus: MNDFTMNDLMGLLPYAPIIAVVITVLVVMIAITMKRSHMVTGTISVVGLNIGLFILLGQMAGIIDSGSLVPAAEQLFVIDNFAQFNMVIIFICALACCTLSYAYLADLKDHKEELYLLMLLSTVGALLMVCAQHLASFFMSLEMLSIPLYGMLSYTYMRTRSLESGLKYLVLSATASATLLMGMAFIYAEVGSLAFKPISLTLADTFESPLLILGAAMMMFGIAFKLSAAPFHIWTPDVYEGAPAPIATYLASVSKVAMMALAVRFLIDTSLLALPSVQMLLMVMATLSILLGNLLAVRQTSLKRLLGYSSIAHMGYVLIVIVSIGSAADSISSMYMAIYAFTSIGAFGVVTLMSSPYRLSGEADELTHYQGLFWRRPVLTAVMTIMMLSLAGIPLTAGFITKLFAILAAVQGTNWFLAAMIILGSAIGLFYYLRVLLTLFKRPKQFIEFDVSKQWGLRTGGIMVIAVTAIIVFFGVLPNSMIEWASLARIW.

Transmembrane regions (helical) follow at residues 12–32, 44–64, 76–96, 115–135, 138–158, 169–189, 212–232, 244–264, 272–292, 306–326, 334–354, 381–401, 416–438, and 463–483; these read LLPYAPIIAVVITVLVVMIAI, ISVVGLNIGLFILLGQMAGII, LFVIDNFAQFNMVIIFICALA, LYLLMLLSTVGALLMVCAQHL, FFMSLEMLSIPLYGMLSYTYM, YLVLSATASATLLMGMAFIYA, LILGAAMMMFGIAFKLSAAPF, PAPIATYLASVSKVAMMALAV, LLALPSVQMLLMVMATLSILL, LLGYSSIAHMGYVLIVIVSIG, SMYMAIYAFTSIGAFGVVTLM, TAVMTIMMLSLAGIPLTAGFI, WFLAAMIILGSAIGLFYYLRVLL, and IMVIAVTAIIVFFGVLPNSMI.

It belongs to the complex I subunit 2 family. NDH-1 is composed of 14 different subunits. Subunits NuoA, H, J, K, L, M, N constitute the membrane sector of the complex.

The protein resides in the cell inner membrane. The catalysed reaction is a quinone + NADH + 5 H(+)(in) = a quinol + NAD(+) + 4 H(+)(out). NDH-1 shuttles electrons from NADH, via FMN and iron-sulfur (Fe-S) centers, to quinones in the respiratory chain. The immediate electron acceptor for the enzyme in this species is believed to be ubiquinone. Couples the redox reaction to proton translocation (for every two electrons transferred, four hydrogen ions are translocated across the cytoplasmic membrane), and thus conserves the redox energy in a proton gradient. This chain is NADH-quinone oxidoreductase subunit N, found in Psychrobacter arcticus (strain DSM 17307 / VKM B-2377 / 273-4).